A 282-amino-acid chain; its full sequence is Formamidopyrimidine-DNA glycosylase (282 aa).

Catalysis depends on Pro2, which acts as the Schiff-base intermediate with DNA. Glu3 functions as the Proton donor in the catalytic mechanism. The Proton donor; for beta-elimination activity role is filled by Lys60. Residues His99, Arg118, and Lys163 each coordinate DNA. Residues 248–282 (WVYRRSGKNCKKCGEKILREKICGRSTHWCPNCQK) form an FPG-type zinc finger. The active-site Proton donor; for delta-elimination activity is the Arg272.

Belongs to the FPG family. As to quaternary structure, monomer. It depends on Zn(2+) as a cofactor.

It catalyses the reaction Hydrolysis of DNA containing ring-opened 7-methylguanine residues, releasing 2,6-diamino-4-hydroxy-5-(N-methyl)formamidopyrimidine.. The enzyme catalyses 2'-deoxyribonucleotide-(2'-deoxyribose 5'-phosphate)-2'-deoxyribonucleotide-DNA = a 3'-end 2'-deoxyribonucleotide-(2,3-dehydro-2,3-deoxyribose 5'-phosphate)-DNA + a 5'-end 5'-phospho-2'-deoxyribonucleoside-DNA + H(+). Involved in base excision repair of DNA damaged by oxidation or by mutagenic agents. Acts as a DNA glycosylase that recognizes and removes damaged bases. Has a preference for oxidized purines, such as 7,8-dihydro-8-oxoguanine (8-oxoG). Has AP (apurinic/apyrimidinic) lyase activity and introduces nicks in the DNA strand. Cleaves the DNA backbone by beta-delta elimination to generate a single-strand break at the site of the removed base with both 3'- and 5'-phosphates. In Prochlorococcus marinus (strain NATL2A), this protein is Formamidopyrimidine-DNA glycosylase.